Reading from the N-terminus, the 131-residue chain is Aspartate 1-decarboxylase (131 aa).

Catalysis depends on S25, which acts as the Schiff-base intermediate with substrate; via pyruvic acid. S25 carries the pyruvic acid (Ser) modification. T57 serves as a coordination point for substrate. Residue Y58 is the Proton donor of the active site. 73–75 provides a ligand contact to substrate; the sequence is GSA.

The protein belongs to the PanD family. As to quaternary structure, heterooctamer of four alpha and four beta subunits. Requires pyruvate as cofactor. Is synthesized initially as an inactive proenzyme, which is activated by self-cleavage at a specific serine bond to produce a beta-subunit with a hydroxyl group at its C-terminus and an alpha-subunit with a pyruvoyl group at its N-terminus.

Its subcellular location is the cytoplasm. The catalysed reaction is L-aspartate + H(+) = beta-alanine + CO2. The protein operates within cofactor biosynthesis; (R)-pantothenate biosynthesis; beta-alanine from L-aspartate: step 1/1. Functionally, catalyzes the pyruvoyl-dependent decarboxylation of aspartate to produce beta-alanine. This Leptothrix cholodnii (strain ATCC 51168 / LMG 8142 / SP-6) (Leptothrix discophora (strain SP-6)) protein is Aspartate 1-decarboxylase.